Reading from the N-terminus, the 466-residue chain is Tyrosinase HcTyr1 (466 aa).

Cu cation-binding residues include histidine 43, histidine 78, histidine 87, histidine 211, histidine 215, and histidine 238.

This sequence belongs to the tyrosinase family. In terms of assembly, monomer. Formation of a dimer is observed when the protein is in its holo-form. Requires Cu(2+) as cofactor. Post-translationally, in vitro, the C-terminal lid-domain is slowly cleaved off in an autoprocessive time dependent manner, leading to the formation of cleaved-HcTyr1. The processing rate is not influenced by factors such as pH and added metal ions.

It catalyses the reaction L-tyrosine + O2 = L-dopaquinone + H2O. The catalysed reaction is 2 L-tyrosine + O2 = 2 L-dopa. It carries out the reaction 2 L-dopa + O2 = 2 L-dopaquinone + 2 H2O. Cleavage of the lid-domain increases activity levels, affinity for substrate and turnover rate. Exhibits high saline tolerance. Copper-containing oxidase that catalyzes the conversion of L-tyrosine to L-dopa and then to L-dopaquinone. Can use various phenols such as p-coumaric acid, phenol, pyrocatechol, syringol or pyrogallol. Accepts several of the constituents of lignin and potentially participates in lignin functionalization. This chain is Tyrosinase HcTyr1, found in Hahella sp. (strain CCB-MM4).